A 166-amino-acid chain; its full sequence is Ribosome maturation factor RimM (166 aa).

Positions 94–165 (EGEYYLGKLI…TIELKVLDLL (72 aa)) constitute a PRC barrel domain.

The protein belongs to the RimM family. As to quaternary structure, binds ribosomal protein uS19.

The protein resides in the cytoplasm. An accessory protein needed during the final step in the assembly of 30S ribosomal subunit, possibly for assembly of the head region. Essential for efficient processing of 16S rRNA. May be needed both before and after RbfA during the maturation of 16S rRNA. It has affinity for free ribosomal 30S subunits but not for 70S ribosomes. The chain is Ribosome maturation factor RimM from Borreliella afzelii (strain PKo) (Borrelia afzelii).